We begin with the raw amino-acid sequence, 299 residues long: Urease accessory protein UreD (299 aa).

Belongs to the UreD family. In terms of assembly, ureD, UreF and UreG form a complex that acts as a GTP-hydrolysis-dependent molecular chaperone, activating the urease apoprotein by helping to assemble the nickel containing metallocenter of UreC. The UreE protein probably delivers the nickel.

It is found in the cytoplasm. Its function is as follows. Required for maturation of urease via the functional incorporation of the urease nickel metallocenter. This is Urease accessory protein UreD from Natronomonas pharaonis (strain ATCC 35678 / DSM 2160 / CIP 103997 / JCM 8858 / NBRC 14720 / NCIMB 2260 / Gabara) (Halobacterium pharaonis).